We begin with the raw amino-acid sequence, 121 residues long: NADPH-dependent 7-cyano-7-deazaguanine reductase (121 aa).

The active-site Thioimide intermediate is the C36. D43 (proton donor) is an active-site residue. Residues 58-60 (VEL) and 77-78 (YE) each bind substrate.

Belongs to the GTP cyclohydrolase I family. QueF type 1 subfamily.

Its subcellular location is the cytoplasm. The enzyme catalyses 7-aminomethyl-7-carbaguanine + 2 NADP(+) = 7-cyano-7-deazaguanine + 2 NADPH + 3 H(+). It functions in the pathway tRNA modification; tRNA-queuosine biosynthesis. In terms of biological role, catalyzes the NADPH-dependent reduction of 7-cyano-7-deazaguanine (preQ0) to 7-aminomethyl-7-deazaguanine (preQ1). In Rhodopirellula baltica (strain DSM 10527 / NCIMB 13988 / SH1), this protein is NADPH-dependent 7-cyano-7-deazaguanine reductase.